The chain runs to 685 residues: DNA ligase (685 aa).

Residues 47–51 (DSEYD), 96–97 (SL), and E125 contribute to the NAD(+) site. K127 functions as the N6-AMP-lysine intermediate in the catalytic mechanism. NAD(+)-binding residues include R148, E185, K304, and K328. Zn(2+) contacts are provided by C422, C425, C440, and C446. The BRCT domain occupies 605–685 (ADAQPLKGQT…ALLALFAANR (81 aa)).

This sequence belongs to the NAD-dependent DNA ligase family. LigA subfamily. Mg(2+) is required as a cofactor. Mn(2+) serves as cofactor.

The catalysed reaction is NAD(+) + (deoxyribonucleotide)n-3'-hydroxyl + 5'-phospho-(deoxyribonucleotide)m = (deoxyribonucleotide)n+m + AMP + beta-nicotinamide D-nucleotide.. Functionally, DNA ligase that catalyzes the formation of phosphodiester linkages between 5'-phosphoryl and 3'-hydroxyl groups in double-stranded DNA using NAD as a coenzyme and as the energy source for the reaction. It is essential for DNA replication and repair of damaged DNA. This chain is DNA ligase, found in Shewanella sp. (strain W3-18-1).